The primary structure comprises 355 residues: C-C chemokine receptor type 8 (355 aa).

At 1 to 35 the chain is on the extracellular side; sequence MDYTLDLSVTTVTDYYYPDIFSSPCDAELIQTNGK. Residues 36–63 form a helical membrane-spanning segment; it reads LLLAVFYCLLFVFSLLGNSLVILVLVVC. Residues 64–73 are Cytoplasmic-facing; it reads KKLRSITDVY. The chain crosses the membrane as a helical span at residues 74 to 93; sequence LLNLALSDLLFVFSFPFQTY. The Extracellular segment spans residues 94 to 107; sequence YLLDQWVFGTVMCK. Cysteine 106 and cysteine 183 are oxidised to a cystine. The helical transmembrane segment at 108–129 threads the bilayer; that stretch reads VVSGFYYIGFYSSMFFITLMSV. Over 130–146 the chain is Cytoplasmic; the sequence is DRYLAVVHAVYALKVRT. A helical transmembrane segment spans residues 147–171; the sequence is IRMGTTLCLAVWLTAIMATIPLLVF. Residues 172–202 are Extracellular-facing; it reads YQVASEDGVLQCYSFYNQQTLKWKIFTNFKM. A helical membrane pass occupies residues 203 to 222; sequence NILGLLIPFTIFMFCYIKIL. At 223–238 the chain is on the cytoplasmic side; sequence HQLKRCQNHNKTKAIR. Residues 239–263 form a helical membrane-spanning segment; sequence LVLIVVIASLLFWVPFNVVLFLTSL. Residues 264–280 lie on the Extracellular side of the membrane; that stretch reads HSMHILDGCSISQQLTY. A helical membrane pass occupies residues 281 to 304; that stretch reads ATHVTEIISFTHCCVNPVIYAFVG. Residues 305–355 lie on the Cytoplasmic side of the membrane; that stretch reads EKFKKHLSEIFQKSCSQIFNYLGRQMPRESCEKSSSCQQHSSRSSSVDYIL.

This sequence belongs to the G-protein coupled receptor 1 family.

Its subcellular location is the cell membrane. Its function is as follows. Receptor for the chemokine CCL1/SCYA1/I-309. May regulate monocyte chemotaxis and thymic cell line apoptosis. Alternative coreceptor with CD4 for HIV-1 infection. The sequence is that of C-C chemokine receptor type 8 (CCR8) from Homo sapiens (Human).